A 137-amino-acid chain; its full sequence is Ribosome-binding factor A (137 aa).

Belongs to the RbfA family. In terms of assembly, monomer. Binds 30S ribosomal subunits, but not 50S ribosomal subunits or 70S ribosomes.

It is found in the cytoplasm. In terms of biological role, one of several proteins that assist in the late maturation steps of the functional core of the 30S ribosomal subunit. Associates with free 30S ribosomal subunits (but not with 30S subunits that are part of 70S ribosomes or polysomes). Required for efficient processing of 16S rRNA. May interact with the 5'-terminal helix region of 16S rRNA. In Cereibacter sphaeroides (strain KD131 / KCTC 12085) (Rhodobacter sphaeroides), this protein is Ribosome-binding factor A.